Consider the following 408-residue polypeptide: Lupus La protein (408 aa).

The 93-residue stretch at 7–99 (NEKMAALEAK…RRSPSKPLPE (93 aa)) folds into the HTH La-type RNA-binding domain. 2 positions are modified to phosphoserine: serine 92 and serine 94. Residues 111-187 (RSVYIKGFPT…TDLLILFKDD (77 aa)) form the RRM domain. Lysine 116 is subject to N6-acetyllysine. Threonine 120 carries the post-translational modification Phosphothreonine. The residue at position 128 (lysine 128) is an N6-acetyllysine. A Phosphoserine modification is found at serine 225. One can recognise a xRRM domain in the interval 227–348 (EEKIGCLLKF…KGKGNKAAQP (122 aa)). An N6-acetyllysine mark is found at lysine 328, lysine 341, and lysine 360. Over residues 329 to 342 (WKSKGRRFKGKGKG) the composition is skewed to basic residues. The disordered stretch occupies residues 329 to 408 (WKSKGRRFKG…QKTENGAGDQ (80 aa)). Threonine 362 is modified (phosphothreonine). At serine 366 the chain carries Phosphoserine; by CK2. Positions 384 to 395 (RAREETDKEEPA) are enriched in basic and acidic residues.

As to quaternary structure, interacts with DDX15. May interact with RUFY1. Post-translationally, phosphorylated. The phosphorylation sites are at the C-terminal part of the protein. The N-terminus is blocked.

It is found in the nucleus. Functionally, binds to the 3' poly(U) terminus of nascent RNA polymerase III transcripts, protecting them from exonuclease digestion and facilitating their folding and maturation. In case of Coxsackievirus B3 infection, binds to the viral internal ribosome entry site (IRES) and stimulates the IRES-mediated translation. This is Lupus La protein (SSB) from Homo sapiens (Human).